The sequence spans 1300 residues: Phospholipid-transporting ATPase IK (1300 aa).

Residues 1-11 (MGTGPAQTPRS) show a composition bias toward polar residues. Residues 1 to 98 (MGTGPAQTPR…SLGQREDLQD (98 aa)) are disordered. Over 1-149 (MGTGPAQTPR…TAKYNFYSFL (149 aa)) the chain is Cytoplasmic. Basic residues predominate over residues 65–74 (RRHKAQPGRA). Residues 150 to 171 (PLNLYEQFHRVSNLFFLIIIIL) traverse the membrane as a helical segment. The Exoplasmic loop segment spans residues 172 to 177 (QSIPDI). Residues 178–197 (STLPWFSLSTPMVCLLFIRA) traverse the membrane as a helical segment. Over 198–381 (TRDLVDDMGR…TKLDLLMNKL (184 aa)) the chain is Cytoplasmic. A helical membrane pass occupies residues 382-403 (VVVIFISVVLVCLVLAFGFGFS). Residues 404 to 430 (VKEFKDHHYYLSGVHGSSVAAESFFVF) are Exoplasmic loop-facing. The chain crosses the membrane as a helical span at residues 431-452 (WSFLILLSVTIPMSMFILSEFI). Over 453 to 995 (YLGNSVFIDW…GRWSYVRICK (543 aa)) the chain is Cytoplasmic. Aspartate 495 serves as the catalytic 4-aspartylphosphate intermediate. Aspartate 495, lysine 496, threonine 497, glutamate 596, phenylalanine 637, lysine 660, arginine 693, threonine 763, glycine 764, aspartate 765, arginine 913, and lysine 919 together coordinate ATP. Aspartate 495 serves as a coordination point for Mg(2+). A Mg(2+)-binding site is contributed by threonine 497. A Mg(2+)-binding site is contributed by aspartate 939. ATP contacts are provided by asparagine 942 and aspartate 943. Aspartate 943 contacts Mg(2+). A helical membrane pass occupies residues 996–1016 (FLRYFFYKSMASMMVQVWFAC). Over 1017–1028 (YNGFTGQPLYEG) the chain is Exoplasmic loop. The chain crosses the membrane as a helical span at residues 1029-1048 (WFLALFNLLYSTLPVLYIGL). At 1049 to 1078 (FEQDVSAEQSLEKPELYVVGQKDELFNYWV) the chain is on the cytoplasmic side. Residues 1079–1100 (FVQAIAHGVTTSLVNFFMTLWI) form a helical membrane-spanning segment. Topologically, residues 1101 to 1112 (SRDTAGPASFSD) are exoplasmic loop. The helical transmembrane segment at 1113–1135 (HQSFAVVVALSCLLSITMEVILI) threads the bilayer. The Cytoplasmic portion of the chain corresponds to 1136–1141 (IKYWTA). The chain crosses the membrane as a helical span at residues 1142 to 1162 (LCVATILLSLGFYAIMTTTTQ). Residues 1163 to 1182 (SFWLFRVSPTTFPFLYADLS) lie on the Exoplasmic loop side of the membrane. Residues 1183–1207 (VMSSPSILLVVLLSVSINTFPVLAL) form a helical membrane-spanning segment. Residues 1208–1300 (RVIFPALKEL…EAASSPKESQ (93 aa)) are Cytoplasmic-facing. The segment at 1272-1300 (RGPGVSSDIASESLDPSDEEAASSPKESQ) is disordered.

Belongs to the cation transport ATPase (P-type) (TC 3.A.3) family. Type IV subfamily. The cofactor is Mg(2+). As to expression, isoform 3 was only detected in testis.

The protein resides in the cytoplasmic vesicle. The protein localises to the secretory vesicle. Its subcellular location is the acrosome membrane. It localises to the endoplasmic reticulum membrane. The enzyme catalyses ATP + H2O + phospholipidSide 1 = ADP + phosphate + phospholipidSide 2.. It carries out the reaction a 1,2-diacyl-sn-glycero-3-phospho-L-serine(out) + ATP + H2O = a 1,2-diacyl-sn-glycero-3-phospho-L-serine(in) + ADP + phosphate + H(+). Functionally, P4-ATPase flippase which catalyzes the hydrolysis of ATP coupled to the transport of aminophospholipids from the outer to the inner leaflet of various membranes and ensures the maintenance of asymmetric distribution of phospholipids. Phospholipid translocation also seems to be implicated in vesicle formation and in uptake of lipid signaling molecules. May be responsible for the maintenance of asymmetric distribution of phosphatidylserine (PS) in spermatozoa membranes. Involved in acrosome reactions and binding of spermatozoa to zona pellucida. This is Phospholipid-transporting ATPase IK from Homo sapiens (Human).